The primary structure comprises 147 residues: Ribonuclease 4 (147 aa).

The N-terminal stretch at 1–28 (MALQRTHSLLLLLLLTLLGLGLVQPSYG) is a signal peptide. Glutamine 29 carries the pyrrolidone carboxylic acid modification. DUMP is bound by residues arginine 35, histidine 40, lysine 68, asparagine 71, and threonine 72. The active-site Proton acceptor is histidine 40. Disulfide bonds link cysteine 53–cysteine 109, cysteine 67–cysteine 120, cysteine 85–cysteine 135, and cysteine 92–cysteine 99. The active-site Proton donor is the histidine 144. Residue phenylalanine 145 participates in dUMP binding.

Belongs to the pancreatic ribonuclease family. As to expression, expressed in the cortical and medullary tubules of the kidney, and in the transitional epithelium of the urinary bladder (at protein level).

It localises to the secreted. Its function is as follows. Cleaves preferentially after uridine bases. Has antimicrobial activity against uropathogenic E.coli (UPEC). Probably contributes to urinary tract sterility. This is Ribonuclease 4 (RNASE4) from Homo sapiens (Human).